The following is a 70-amino-acid chain: Large ribosomal subunit protein bL31 (70 aa).

Positions 16, 18, 37, and 40 each coordinate Zn(2+).

Belongs to the bacterial ribosomal protein bL31 family. Type A subfamily. In terms of assembly, part of the 50S ribosomal subunit. It depends on Zn(2+) as a cofactor.

Functionally, binds the 23S rRNA. This chain is Large ribosomal subunit protein bL31, found in Salmonella agona (strain SL483).